Reading from the N-terminus, the 87-residue chain is Small ribosomal subunit protein uS17 (87 aa).

The protein belongs to the universal ribosomal protein uS17 family. Part of the 30S ribosomal subunit.

One of the primary rRNA binding proteins, it binds specifically to the 5'-end of 16S ribosomal RNA. The chain is Small ribosomal subunit protein uS17 from Aster yellows witches'-broom phytoplasma (strain AYWB).